The primary structure comprises 205 residues: Methylthioribulose-1-phosphate dehydratase (205 aa).

The Zn(2+) site is built by His95 and His97.

This sequence belongs to the aldolase class II family. MtnB subfamily. The cofactor is Zn(2+).

The enzyme catalyses 5-(methylsulfanyl)-D-ribulose 1-phosphate = 5-methylsulfanyl-2,3-dioxopentyl phosphate + H2O. Its pathway is amino-acid biosynthesis; L-methionine biosynthesis via salvage pathway; L-methionine from S-methyl-5-thio-alpha-D-ribose 1-phosphate: step 2/6. In terms of biological role, catalyzes the dehydration of methylthioribulose-1-phosphate (MTRu-1-P) into 2,3-diketo-5-methylthiopentyl-1-phosphate (DK-MTP-1-P). This Microcystis aeruginosa (strain NIES-843 / IAM M-2473) protein is Methylthioribulose-1-phosphate dehydratase.